The chain runs to 174 residues: Peptide methionine sulfoxide reductase MsrA (174 aa).

Cys-10 is an active-site residue.

The protein belongs to the MsrA Met sulfoxide reductase family.

It carries out the reaction L-methionyl-[protein] + [thioredoxin]-disulfide + H2O = L-methionyl-(S)-S-oxide-[protein] + [thioredoxin]-dithiol. The catalysed reaction is [thioredoxin]-disulfide + L-methionine + H2O = L-methionine (S)-S-oxide + [thioredoxin]-dithiol. Functionally, has an important function as a repair enzyme for proteins that have been inactivated by oxidation. Catalyzes the reversible oxidation-reduction of methionine sulfoxide in proteins to methionine. The chain is Peptide methionine sulfoxide reductase MsrA from Paenarthrobacter aurescens (strain TC1).